A 362-amino-acid polypeptide reads, in one-letter code: Porin Omp2b (362 aa).

The signal sequence occupies residues 1–22 (MNIKSLLLGSAAALVAASGAQA).

This sequence belongs to the alphaproteobacteria porin family. As to quaternary structure, homotrimer.

It localises to the cell outer membrane. Functionally, forms passive diffusion pores that allow small molecular weight hydrophilic materials across the outer membrane. This is Porin Omp2b (omp2b) from Brucella canis (strain ATCC 23365 / NCTC 10854 / RM-666).